The primary structure comprises 376 residues: Chaperone protein DnaJ 2 (376 aa).

Residues 8-72 (DYYEILGVPR…EKRKLYDMYG (65 aa)) enclose the J domain. Residues 143–219 (GTTVPIEVER…CTGRGYGLVK (77 aa)) form a CR-type zinc finger. Zn(2+) is bound by residues cysteine 156, cysteine 159, cysteine 172, cysteine 175, cysteine 194, cysteine 197, cysteine 207, and cysteine 210. CXXCXGXG motif repeat units follow at residues 156–163 (CSACGGTG), 172–179 (CPTCGGRG), 194–201 (CPTCGGEG), and 207–214 (CHACTGRG).

This sequence belongs to the DnaJ family. In terms of assembly, homodimer. The cofactor is Zn(2+).

It localises to the cytoplasm. Functionally, participates actively in the response to hyperosmotic and heat shock by preventing the aggregation of stress-denatured proteins and by disaggregating proteins, also in an autonomous, DnaK-independent fashion. Unfolded proteins bind initially to DnaJ; upon interaction with the DnaJ-bound protein, DnaK hydrolyzes its bound ATP, resulting in the formation of a stable complex. GrpE releases ADP from DnaK; ATP binding to DnaK triggers the release of the substrate protein, thus completing the reaction cycle. Several rounds of ATP-dependent interactions between DnaJ, DnaK and GrpE are required for fully efficient folding. Also involved, together with DnaK and GrpE, in the DNA replication of plasmids through activation of initiation proteins. In Aquifex aeolicus (strain VF5), this protein is Chaperone protein DnaJ 2.